The chain runs to 373 residues: S-adenosylmethionine:tRNA ribosyltransferase-isomerase (373 aa).

This sequence belongs to the QueA family. Monomer.

It is found in the cytoplasm. It carries out the reaction 7-aminomethyl-7-carbaguanosine(34) in tRNA + S-adenosyl-L-methionine = epoxyqueuosine(34) in tRNA + adenine + L-methionine + 2 H(+). Its pathway is tRNA modification; tRNA-queuosine biosynthesis. Transfers and isomerizes the ribose moiety from AdoMet to the 7-aminomethyl group of 7-deazaguanine (preQ1-tRNA) to give epoxyqueuosine (oQ-tRNA). The sequence is that of S-adenosylmethionine:tRNA ribosyltransferase-isomerase from Rhizobium etli (strain CIAT 652).